We begin with the raw amino-acid sequence, 468 residues long: UDP-N-acetylmuramate--L-alanine ligase (468 aa).

112–118 (GTHGKTT) contributes to the ATP binding site.

The protein belongs to the MurCDEF family.

It localises to the cytoplasm. The enzyme catalyses UDP-N-acetyl-alpha-D-muramate + L-alanine + ATP = UDP-N-acetyl-alpha-D-muramoyl-L-alanine + ADP + phosphate + H(+). Its pathway is cell wall biogenesis; peptidoglycan biosynthesis. Cell wall formation. This chain is UDP-N-acetylmuramate--L-alanine ligase, found in Neisseria meningitidis serogroup C (strain 053442).